Reading from the N-terminus, the 490-residue chain is Betaine aldehyde dehydrogenase (490 aa).

Positions 27 and 93 each coordinate K(+). 150–152 (GAW) contributes to the NAD(+) binding site. Lys-162 acts as the Charge relay system in catalysis. 176–179 (KPSE) lines the NAD(+) pocket. Val-180 contributes to the K(+) binding site. An NAD(+)-binding site is contributed by 230–233 (GTDT). Leu-246 serves as a coordination point for K(+). Glu-252 (proton acceptor) is an active-site residue. NAD(+)-binding residues include Gly-254, Cys-286, and Glu-387. Residue Cys-286 is the Nucleophile of the active site. Cys-286 bears the Cysteine sulfenic acid (-SOH) mark. K(+) is bound by residues Lys-457 and Gly-460. Catalysis depends on Glu-464, which acts as the Charge relay system.

This sequence belongs to the aldehyde dehydrogenase family. As to quaternary structure, dimer of dimers. K(+) serves as cofactor.

The enzyme catalyses betaine aldehyde + NAD(+) + H2O = glycine betaine + NADH + 2 H(+). It functions in the pathway amine and polyamine biosynthesis; betaine biosynthesis via choline pathway; betaine from betaine aldehyde: step 1/1. In terms of biological role, involved in the biosynthesis of the osmoprotectant glycine betaine. Catalyzes the irreversible oxidation of betaine aldehyde to the corresponding acid. In Pseudomonas savastanoi pv. phaseolicola (strain 1448A / Race 6) (Pseudomonas syringae pv. phaseolicola (strain 1448A / Race 6)), this protein is Betaine aldehyde dehydrogenase.